The sequence spans 203 residues: Glycerol-3-phosphate acyltransferase (203 aa).

5 helical membrane passes run 10 to 30, 59 to 79, 87 to 107, 116 to 136, and 160 to 180; these read MLIL…GLIL, GAAA…VLLA, AAQV…WLGF, FLGL…LSWL, and LVLL…LMVF.

The protein belongs to the PlsY family. In terms of assembly, probably interacts with PlsX.

The protein localises to the cell inner membrane. The enzyme catalyses an acyl phosphate + sn-glycerol 3-phosphate = a 1-acyl-sn-glycero-3-phosphate + phosphate. It participates in lipid metabolism; phospholipid metabolism. In terms of biological role, catalyzes the transfer of an acyl group from acyl-phosphate (acyl-PO(4)) to glycerol-3-phosphate (G3P) to form lysophosphatidic acid (LPA). This enzyme utilizes acyl-phosphate as fatty acyl donor, but not acyl-CoA or acyl-ACP. This chain is Glycerol-3-phosphate acyltransferase, found in Ruegeria pomeroyi (strain ATCC 700808 / DSM 15171 / DSS-3) (Silicibacter pomeroyi).